The following is a 93-amino-acid chain: Small ribosomal subunit protein uS19 (93 aa).

Belongs to the universal ribosomal protein uS19 family.

Protein S19 forms a complex with S13 that binds strongly to the 16S ribosomal RNA. The polypeptide is Small ribosomal subunit protein uS19 (Nautilia profundicola (strain ATCC BAA-1463 / DSM 18972 / AmH)).